The primary structure comprises 296 residues: Nucleotide-binding protein Pnuc_1915 (296 aa).

8–15 (GISGSGKS) lines the ATP pocket. 57 to 60 (DARR) contributes to the GTP binding site.

The protein belongs to the RapZ-like family.

In terms of biological role, displays ATPase and GTPase activities. The polypeptide is Nucleotide-binding protein Pnuc_1915 (Polynucleobacter asymbioticus (strain DSM 18221 / CIP 109841 / QLW-P1DMWA-1) (Polynucleobacter necessarius subsp. asymbioticus)).